The sequence spans 219 residues: GTP-binding nuclear protein GSP1/CNR1 (219 aa).

At S2 the chain carries N-acetylserine. At S2 the chain carries Phosphoserine. The region spanning 9–173 (EVPTFKLVLV…LWLARKLAGN (165 aa)) is the Small GTPase Ran-type domain. 20 to 27 (DGGTGKTT) is a binding site for GTP. The segment at 39 to 47 (KKYIATIGV) is switch-I. GTP is bound by residues G70, 124–127 (NKVD), and 152–154 (SAK). Residues 70 to 86 (GQEKFGGLRDGYYINAQ) form a switch-II region.

Belongs to the small GTPase superfamily. Ran family. Found in a nuclear export complex with RanGTP, exportin and pre-miRNA. Forms a complex with YRB1. Interacts with BUD5, CEX1, RRP12, SRM1, and DIS3/RRP44.

It is found in the nucleus. GTP-binding protein involved in nucleocytoplasmic transport. Required for the import of protein into the nucleus and also for RNA export. Essential for cell viability. By analogy with Ras, Ran may be activated when GTP is exchanged for bound GDP by RCC1 and inactivated when GTP is hydrolyzed by Ran upon activation by RanGAP1. The chain is GTP-binding nuclear protein GSP1/CNR1 (GSP1) from Saccharomyces cerevisiae (strain ATCC 204508 / S288c) (Baker's yeast).